A 225-amino-acid polypeptide reads, in one-letter code: Germin-like protein 3-8 (225 aa).

The signal sequence occupies residues 1 to 25 (MSRTSSAPLLVLSAALAVLASTCIA). Residues cysteine 34 and cysteine 57 are joined by a disulfide bond. Residues 71–219 (AGLAVASDTD…SFQVDAKIIK (149 aa)) form the Cupin type-1 domain. Residue asparagine 86 is glycosylated (N-linked (GlcNAc...) asparagine). Positions 119, 121, 126, and 165 each coordinate Mn(2+).

The protein belongs to the germin family. In terms of assembly, oligomer (believed to be a pentamer but probably hexamer).

It localises to the secreted. The protein localises to the extracellular space. It is found in the apoplast. Its function is as follows. May play a role in plant defense. Probably has no oxalate oxidase activity even if the active site is conserved. The polypeptide is Germin-like protein 3-8 (Oryza sativa subsp. japonica (Rice)).